Reading from the N-terminus, the 376-residue chain is 3-dehydroquinate synthase (376 aa).

Residues 115–119 (GVIGD), 139–140 (TS), K152, and K161 each bind NAD(+). 3 residues coordinate Zn(2+): E194, H256, and H275.

It belongs to the sugar phosphate cyclases superfamily. Dehydroquinate synthase family. Requires Co(2+) as cofactor. It depends on Zn(2+) as a cofactor. NAD(+) is required as a cofactor.

It localises to the cytoplasm. The catalysed reaction is 7-phospho-2-dehydro-3-deoxy-D-arabino-heptonate = 3-dehydroquinate + phosphate. Its pathway is metabolic intermediate biosynthesis; chorismate biosynthesis; chorismate from D-erythrose 4-phosphate and phosphoenolpyruvate: step 2/7. In terms of biological role, catalyzes the conversion of 3-deoxy-D-arabino-heptulosonate 7-phosphate (DAHP) to dehydroquinate (DHQ). This Rhizobium etli (strain CIAT 652) protein is 3-dehydroquinate synthase.